The primary structure comprises 117 residues: Tyrosine-protein phosphatase 25 (117 aa).

A Tyrosine-protein phosphatase domain is found at 1 to 117 (WLMIIEQKCN…DLIGQSPIVV (117 aa)). Residue Asp-85 coordinates substrate.

Belongs to the protein-tyrosine phosphatase family.

It carries out the reaction O-phospho-L-tyrosyl-[protein] + H2O = L-tyrosyl-[protein] + phosphate. The sequence is that of Tyrosine-protein phosphatase 25 (STY-25) from Styela plicata (Wrinkled sea squirt).